We begin with the raw amino-acid sequence, 333 residues long: Low specificity L-threonine aldolase (333 aa).

Position 197 is an N6-(pyridoxal phosphate)lysine (lysine 197).

This sequence belongs to the threonine aldolase family. As to quaternary structure, homotetramer. Requires pyridoxal 5'-phosphate as cofactor.

The enzyme catalyses L-threonine = acetaldehyde + glycine. It carries out the reaction L-allo-threonine = acetaldehyde + glycine. In terms of biological role, catalyzes the cleavage of L-allo-threonine and L-threonine to glycine and acetaldehyde. L-threo-phenylserine and L-erythro-phenylserine are also good substrates. This Escherichia coli (strain K12) protein is Low specificity L-threonine aldolase (ltaE).